We begin with the raw amino-acid sequence, 490 residues long: Alpha-galactosidase (490 aa).

Phe-4–Asp-70 contributes to the NAD(+) binding site. Asn-150 serves as a coordination point for substrate. Cys-171 lines the Mn(2+) pocket. Residue His-172 is the Proton donor of the active site. His-201 provides a ligand contact to Mn(2+). The active-site Proton acceptor is Tyr-258.

It belongs to the glycosyl hydrolase 4 family. In terms of assembly, homodimer. The cofactor is Mn(2+). NAD(+) serves as cofactor.

The enzyme catalyses Hydrolysis of terminal, non-reducing alpha-D-galactose residues in alpha-D-galactosides, including galactose oligosaccharides, galactomannans and galactolipids.. In Rhizobium meliloti (strain 1021) (Ensifer meliloti), this protein is Alpha-galactosidase (melA).